A 130-amino-acid chain; its full sequence is Glycoprotein hormone beta-5 (130 aa).

The N-terminal stretch at 1–24 (MKLAFLFLGPMALLLLAGYGCVLG) is a signal peptide. 5 disulfides stabilise this stretch: cysteine 36–cysteine 84, cysteine 50–cysteine 99, cysteine 60–cysteine 115, cysteine 64–cysteine 117, and cysteine 120–cysteine 127. An N-linked (GlcNAc...) asparagine glycan is attached at asparagine 87.

It belongs to the glycoprotein hormones subunit beta family. As to quaternary structure, heterodimer with GPHA2; this heterodimer interacts with thyroid-stimulating hormone receptor (TSHR), and hence stimulates cAMP production. Post-translationally, N-glycosylated. As to expression, highly expressed in brain and at low levels in pituitary. Also found in retina, testis and skin but not in pancreas, parotid, kidney, stomach, liver, colon, small intestine, thyroid, brain or adrenal gland. In pituitary, colocalizes with ACTH, suggesting that it is located in corticotrophs.

The protein localises to the secreted. In terms of biological role, functions as a heterodimeric glycoprotein hormone with GPHA2 able to bind and activate the thyroid-stimulating hormone receptor (TSHR), leading to increased cAMP production. Plays a central role in controlling thyroid cell metabolism. The chain is Glycoprotein hormone beta-5 (GPHB5) from Homo sapiens (Human).